The following is a 341-amino-acid chain: Putative gustatory receptor 9a (341 aa).

Position 1 (M1) is a topological domain, cytoplasmic. A helical transmembrane segment spans residues 2–22 (SLWLEHFLTGYFQLCGLVCGW). The Extracellular segment spans residues 23-30 (SGSRLGRL). The chain crosses the membrane as a helical span at residues 31–51 (LSSTFLVLILIELVGEIETYF). The Cytoplasmic segment spans residues 52–68 (TEENPDNESVPAYFAKV). A helical transmembrane segment spans residues 69–89 (IMGVNMAYKMIHAWIALSALF). The Extracellular portion of the chain corresponds to 90 to 113 (ECRRFRYLLEELPPVKATSFIYRH). Residues 114-134 (LILEIILFACNAFLVLSEYTI) form a helical membrane-spanning segment. Residues 135-202 (RGIYLENLRY…LAKVTRSLSH (68 aa)) lie on the Cytoplasmic side of the membrane. Residues 203-223 (LFGLSLLLLNVLCLGDWIIVC) traverse the membrane as a helical segment. Topologically, residues 224-233 (NVYFMVAYLQ) are extracellular. A helical transmembrane segment spans residues 234–254 (VLPATLFLFGQVMFVVCPTLI). Residues 255–318 (KIWSICAASH…GIYHLNLQTL (64 aa)) lie on the Cytoplasmic side of the membrane. Residues 319–339 (AGMFFFILEALVIFLQFVSLV) traverse the membrane as a helical segment. Residues 340–341 (RT) lie on the Extracellular side of the membrane.

Belongs to the insect chemoreceptor superfamily. Gustatory receptor (GR) family. Gr2a subfamily. Expressed in neurons of the terminal external chemosensory organ of larvae.

The protein resides in the cell membrane. Probable gustatory receptor which mediates acceptance or avoidance behavior, depending on its substrates. The sequence is that of Putative gustatory receptor 9a (Gr9a) from Drosophila melanogaster (Fruit fly).